A 211-amino-acid chain; its full sequence is ATP-dependent dethiobiotin synthetase BioD 2 (211 aa).

An ATP-binding site is contributed by 13–18; sequence DIGKTI. Thr-17 serves as a coordination point for Mg(2+). Lys-38 is an active-site residue. Thr-42 provides a ligand contact to substrate. Residues Asp-50, 115 to 118, and 175 to 176 contribute to the ATP site; these read EGAG and NT. Asp-50 and Glu-115 together coordinate Mg(2+).

Belongs to the dethiobiotin synthetase family. Homodimer. Requires Mg(2+) as cofactor.

Its subcellular location is the cytoplasm. It carries out the reaction (7R,8S)-7,8-diammoniononanoate + CO2 + ATP = (4R,5S)-dethiobiotin + ADP + phosphate + 3 H(+). Its pathway is cofactor biosynthesis; biotin biosynthesis; biotin from 7,8-diaminononanoate: step 1/2. Its function is as follows. Catalyzes a mechanistically unusual reaction, the ATP-dependent insertion of CO2 between the N7 and N8 nitrogen atoms of 7,8-diaminopelargonic acid (DAPA, also called 7,8-diammoniononanoate) to form a ureido ring. The protein is ATP-dependent dethiobiotin synthetase BioD 2 of Haemophilus ducreyi (strain 35000HP / ATCC 700724).